Reading from the N-terminus, the 241-residue chain is 3-deoxy-manno-octulosonate cytidylyltransferase (241 aa).

It belongs to the KdsB family.

The protein localises to the cytoplasm. It catalyses the reaction 3-deoxy-alpha-D-manno-oct-2-ulosonate + CTP = CMP-3-deoxy-beta-D-manno-octulosonate + diphosphate. It participates in nucleotide-sugar biosynthesis; CMP-3-deoxy-D-manno-octulosonate biosynthesis; CMP-3-deoxy-D-manno-octulosonate from 3-deoxy-D-manno-octulosonate and CTP: step 1/1. It functions in the pathway bacterial outer membrane biogenesis; lipopolysaccharide biosynthesis. Functionally, activates KDO (a required 8-carbon sugar) for incorporation into bacterial lipopolysaccharide in Gram-negative bacteria. The sequence is that of 3-deoxy-manno-octulosonate cytidylyltransferase from Rickettsia typhi (strain ATCC VR-144 / Wilmington).